The sequence spans 152 residues: Large ribosomal subunit protein uL30 (152 aa).

It belongs to the universal ribosomal protein uL30 family. Part of the 50S ribosomal subunit.

This is Large ribosomal subunit protein uL30 from Archaeoglobus fulgidus (strain ATCC 49558 / DSM 4304 / JCM 9628 / NBRC 100126 / VC-16).